The primary structure comprises 469 residues: NADH-quinone oxidoreductase subunit 13 (469 aa).

14 consecutive transmembrane segments (helical) span residues 1–21 (MVVLAVLLPVVFGALLLLGLP), 23–43 (ALGVLGAGLSFLLNLYLFLTH), 47–67 (VAHAFQAPLLPGAGVYWAFGL), 69–89 (GLSALFFLTIALTVFLGALVA), 91–111 (VEGRFLGLALLMEGLLLGLFA), 115–135 (LLVFYVFFEAALIPALLMLYL), 144–164 (ALYTFVLFTLVGSLPMLAAVL), 190–210 (AFWVFLGFALAFAIKTPLFPL), 258–278 (GLLLFLAALSALYGAWVAFAA), 284–304 (LLAYAGLSHMGVAALGVFSGT), 308–328 (AMGGLYLLAASGVYTGGLFLL), 354–374 (LAALALILFLAMVGLPGLSGF), 390–410 (WLAALAFLSVIASAAYALTAF), and 430–450 (WGFALLSVLALLLMGVFPGYF).

The protein belongs to the complex I subunit 4 family. In terms of assembly, NDH-1 is composed of 15 different subunits, Nqo1 to Nqo15. The complex has a L-shaped structure, with the hydrophobic arm (subunits Nqo7, Nqo8 and Nqo10 to Nqo14) embedded in the membrane and the hydrophilic peripheral arm (subunits Nqo1 to Nqo6, Nqo9 and Nqo15) protruding into the bacterial cytoplasm. The hydrophilic domain contains all the redox centers.

Its subcellular location is the cell inner membrane. The enzyme catalyses a quinone + NADH + 5 H(+)(in) = a quinol + NAD(+) + 4 H(+)(out). Its function is as follows. NDH-1 shuttles electrons from NADH, via FMN and iron-sulfur (Fe-S) centers, to quinones in the respiratory chain. The immediate electron acceptor for the enzyme in this species is menaquinone. Couples the redox reaction to proton translocation (for every two electrons transferred, four hydrogen ions are translocated across the cytoplasmic membrane), and thus conserves the redox energy in a proton gradient required for the synthesis of ATP. In Thermus thermophilus (strain ATCC 27634 / DSM 579 / HB8), this protein is NADH-quinone oxidoreductase subunit 13 (nqo13).